The chain runs to 31 residues: Branched-chain-amino-acid aminotransferase, mitochondrial (31 aa).

The N-terminal 27 residues, 1-27 (MAAAALRQIWARKFLPVPWLLCGPRRY), are a transit peptide targeting the mitochondrion.

This sequence belongs to the class-IV pyridoxal-phosphate-dependent aminotransferase family. In terms of assembly, homodimer. Pyridoxal 5'-phosphate is required as a cofactor.

It is found in the mitochondrion. The catalysed reaction is L-leucine + 2-oxoglutarate = 4-methyl-2-oxopentanoate + L-glutamate. It carries out the reaction L-isoleucine + 2-oxoglutarate = (S)-3-methyl-2-oxopentanoate + L-glutamate. It catalyses the reaction L-valine + 2-oxoglutarate = 3-methyl-2-oxobutanoate + L-glutamate. Catalyzes the first reaction in the catabolism of the essential branched chain amino acids leucine, isoleucine, and valine. May also function as a transporter of branched chain alpha-keto acids. In Sus scrofa (Pig), this protein is Branched-chain-amino-acid aminotransferase, mitochondrial (BCAT2).